The chain runs to 268 residues: Unknown seed protein USP (268 aa).

Residues 1–25 (MEFAHLTVLSLFCLAFVGITATSSG) form the signal peptide. The BURP domain occupies 68–259 (LFFEHDLHPG…GNKAAAWVPN (192 aa)).

As to expression, expressed in seeds. Detected only in the embryo. In germinating seedlings, detected in roots, root caps, root hairs, vascular bundle, mesophyll cells and epidermal cells of the cotyledons and the hypocotyl.

It localises to the golgi apparatus. The protein localises to the golgi stack. It is found in the prevacuolar compartment. Associated with the protein storage vacuole formation. This chain is Unknown seed protein USP, found in Vicia faba (Broad bean).